The following is a 462-amino-acid chain: MAILISDVFFTIGAVLIASSYSVPQMIVGRIILGIGVGGAAVIAPLFITETAPTAVRGRCIGVNAFFIPFGQVVADAIGAGVQNVHNGWRLLFALGVVPSVLQLLLFHYLPESPRILILKGDTDRARTVFQSIYPTATRDMIDYKFRVAQEYVAATTALQSETTFWERVKKVWKTGSYRRSITTVSVLQAAGQLCGFNTLLYYAGTLFGLLGLSNPALGGLIPAGTNAVFVLIGMSLVDKVGRRGLMLFGVPIMLLGLVWNIIGFYYLCKPTGGFLDTSYSYDTTNVGVVIGGIVFFVVGYGLTYSHLVWYQAEYLALEVRSMGSGVATTVCWIANLVVSVSYLSELETMTPSGTYGFYLGLSVIGFAFVVFCFPETKQLSIDETSLLFENDWGVKRSVQMRKERRETRKRFQDAELAEAATAHLEARQQKSTSVSPAELSKFMAGLKGNKRKPSVLVKTAT.

The next 10 helical transmembrane spans lie at 1 to 21 (MAIL…ASSY), 31 to 51 (IILG…ITET), 61 to 81 (IGVN…IGAG), 91 to 111 (LLFA…HYLP), 194 to 214 (LCGF…LGLS), 218 to 238 (LGGL…MSLV), 245 to 265 (GLML…IIGF), 289 to 309 (VVIG…SHLV), 324 to 344 (GSGV…VSYL), and 354 to 374 (GTYG…VFCF).

Belongs to the major facilitator superfamily. Sugar transporter (TC 2.A.1.1) family.

It localises to the cell membrane. It catalyses the reaction myo-inositol(out) + H(+)(out) = myo-inositol(in) + H(+)(in). Transporter for myo-inositol. This Cryptococcus neoformans var. grubii serotype A (strain H99 / ATCC 208821 / CBS 10515 / FGSC 9487) (Filobasidiella neoformans var. grubii) protein is Myo-inositol transporter 3B.